Consider the following 530-residue polypeptide: Neutral amino acid transporter A (530 aa).

M1 is subject to N-acetylmethionine. Positions 1 to 10 (MEKSSETNGY) are enriched in polar residues. The disordered stretch occupies residues 1–28 (MEKSSETNGYLDSAQEGPAAGPGEPGTT). The Cytoplasmic segment spans residues 1 to 41 (MEKSSETNGYLDSAQEGPAAGPGEPGTTARRAGRCAGFLRR). Residues 16–28 (EGPAAGPGEPGTT) are compositionally biased toward low complexity. 3 helical membrane-spanning segments follow: residues 42–62 (HGLVLLTVSGVVAGAGLGAAL), 88–108 (MIILPLVVCSLVSGAASLDAS), and 119–139 (AYFGLTTLGASALAVALAFII). The Extracellular portion of the chain corresponds to 140-216 (KPGSGSQTLQ…VTIEKIPIGT (77 aa)). The N-linked (GlcNAc...) asparagine glycan is linked to N201. 6 helical membrane passes run 217 to 237 (EIEGMNILGLVLFALVLGVAL), 257 to 277 (ATMVLVSWIMWYVPVGIMFLV), 298 to 318 (IFTSILGHFIHGGIVLPLIYF), 328 to 348 (FLLGLLTPFATAFATCSSSAT), 373 to 393 (IGATVNMDGAAIFQCVAAVFI), and 418 to 438 (VGAAGVPAGGVLTIAIILEAI). The segment at 488 to 530 (ELSEVKVEAIPNSKSEEETSPLVTHPNPTGPAASTPESKESVL) is disordered. A phosphoserine mark is found at S507, S525, and S528.

This sequence belongs to the dicarboxylate/amino acid:cation symporter (DAACS) (TC 2.A.23) family. SLC1A4 subfamily.

It is found in the membrane. Its subcellular location is the melanosome. The enzyme catalyses L-threonine(in) + Na(+)(in) = L-threonine(out) + Na(+)(out). It carries out the reaction L-serine(in) + Na(+)(in) = L-serine(out) + Na(+)(out). The catalysed reaction is L-cysteine(in) + Na(+)(in) = L-cysteine(out) + Na(+)(out). It catalyses the reaction L-alanine(in) + Na(+)(in) = L-alanine(out) + Na(+)(out). The enzyme catalyses L-proline(in) + Na(+)(in) = L-proline(out) + Na(+)(out). It carries out the reaction 4-hydroxy-L-proline(in) + Na(+)(in) = 4-hydroxy-L-proline(out) + Na(+)(out). Functionally, sodium-dependent neutral amino-acid transporter that mediates transport of alanine, serine, cysteine, proline, hydroxyproline and threonine. In Bos taurus (Bovine), this protein is Neutral amino acid transporter A (SLC1A4).